The following is a 147-amino-acid chain: UPF0306 protein YhbP (147 aa).

The protein belongs to the UPF0306 family.

The sequence is that of UPF0306 protein YhbP from Escherichia fergusonii (strain ATCC 35469 / DSM 13698 / CCUG 18766 / IAM 14443 / JCM 21226 / LMG 7866 / NBRC 102419 / NCTC 12128 / CDC 0568-73).